A 64-amino-acid polypeptide reads, in one-letter code: Large ribosomal subunit protein uL29 (64 aa).

This sequence belongs to the universal ribosomal protein uL29 family.

This chain is Large ribosomal subunit protein uL29, found in Coprothermobacter proteolyticus (strain ATCC 35245 / DSM 5265 / OCM 4 / BT).